A 468-amino-acid chain; its full sequence is Cysteine--tRNA ligase (468 aa).

C29 provides a ligand contact to Zn(2+). The short motif at P31–N41 is the 'HIGH' region element. 3 residues coordinate Zn(2+): C209, H234, and E238. Positions K266–S270 match the 'KMSKS' region motif. Residue K269 participates in ATP binding.

Belongs to the class-I aminoacyl-tRNA synthetase family. As to quaternary structure, monomer. Zn(2+) is required as a cofactor.

The protein resides in the cytoplasm. The enzyme catalyses tRNA(Cys) + L-cysteine + ATP = L-cysteinyl-tRNA(Cys) + AMP + diphosphate. This is Cysteine--tRNA ligase from Brevibacillus brevis (strain 47 / JCM 6285 / NBRC 100599).